A 660-amino-acid chain; its full sequence is Bifunctional polymyxin resistance protein ArnA (660 aa).

Residues 1 to 304 are formyltransferase ArnAFT; that stretch reads MKAIVFAYHD…EMGIVTDVRL (304 aa). Catalysis depends on His104, which acts as the Proton donor; for formyltransferase activity. Residues Arg114 and 136–140 contribute to the (6R)-10-formyltetrahydrofolate site; that span reads VKRPD. The dehydrogenase ArnADH stretch occupies residues 314-660; that stretch reads RRTRVLILGV…RTTVQEGDGA (347 aa). NAD(+) contacts are provided by residues Asp347 and 368–369; that span reads DI. UDP-alpha-D-glucuronate-binding positions include Ala393, Tyr398, and 432–433; that span reads TS. Glu434 serves as the catalytic Proton acceptor; for decarboxylase activity. Residues Arg460, Asn492, 526–535, and Tyr613 contribute to the UDP-alpha-D-glucuronate site; that span reads KLMDGGAQKR. Arg619 (proton donor; for decarboxylase activity) is an active-site residue.

This sequence in the N-terminal section; belongs to the Fmt family. UDP-L-Ara4N formyltransferase subfamily. It in the C-terminal section; belongs to the NAD(P)-dependent epimerase/dehydratase family. UDP-glucuronic acid decarboxylase subfamily. As to quaternary structure, homohexamer, formed by a dimer of trimers.

It catalyses the reaction UDP-alpha-D-glucuronate + NAD(+) = UDP-beta-L-threo-pentopyranos-4-ulose + CO2 + NADH. The catalysed reaction is UDP-4-amino-4-deoxy-beta-L-arabinose + (6R)-10-formyltetrahydrofolate = UDP-4-deoxy-4-formamido-beta-L-arabinose + (6S)-5,6,7,8-tetrahydrofolate + H(+). Its pathway is nucleotide-sugar biosynthesis; UDP-4-deoxy-4-formamido-beta-L-arabinose biosynthesis; UDP-4-deoxy-4-formamido-beta-L-arabinose from UDP-alpha-D-glucuronate: step 1/3. It functions in the pathway nucleotide-sugar biosynthesis; UDP-4-deoxy-4-formamido-beta-L-arabinose biosynthesis; UDP-4-deoxy-4-formamido-beta-L-arabinose from UDP-alpha-D-glucuronate: step 3/3. The protein operates within bacterial outer membrane biogenesis; lipopolysaccharide biosynthesis. In terms of biological role, bifunctional enzyme that catalyzes the oxidative decarboxylation of UDP-glucuronic acid (UDP-GlcUA) to UDP-4-keto-arabinose (UDP-Ara4O) and the addition of a formyl group to UDP-4-amino-4-deoxy-L-arabinose (UDP-L-Ara4N) to form UDP-L-4-formamido-arabinose (UDP-L-Ara4FN). The modified arabinose is attached to lipid A and is required for resistance to polymyxin and cationic antimicrobial peptides. This chain is Bifunctional polymyxin resistance protein ArnA, found in Serratia proteamaculans (strain 568).